A 547-amino-acid chain; its full sequence is Chaperonin GroEL (547 aa).

ATP contacts are provided by residues 30-33 (TLGP), Lys51, 87-91 (DGTTT), Gly415, 479-481 (NAA), and Asp495.

It belongs to the chaperonin (HSP60) family. As to quaternary structure, forms a cylinder of 14 subunits composed of two heptameric rings stacked back-to-back. Interacts with the co-chaperonin GroES.

The protein resides in the cytoplasm. It catalyses the reaction ATP + H2O + a folded polypeptide = ADP + phosphate + an unfolded polypeptide.. Its function is as follows. Together with its co-chaperonin GroES, plays an essential role in assisting protein folding. The GroEL-GroES system forms a nano-cage that allows encapsulation of the non-native substrate proteins and provides a physical environment optimized to promote and accelerate protein folding. In Pseudomonas putida (strain GB-1), this protein is Chaperonin GroEL.